The following is a 109-amino-acid chain: Large ribosomal subunit protein uL22 (109 aa).

The protein belongs to the universal ribosomal protein uL22 family. Part of the 50S ribosomal subunit.

This protein binds specifically to 23S rRNA; its binding is stimulated by other ribosomal proteins, e.g. L4, L17, and L20. It is important during the early stages of 50S assembly. It makes multiple contacts with different domains of the 23S rRNA in the assembled 50S subunit and ribosome. In terms of biological role, the globular domain of the protein is located near the polypeptide exit tunnel on the outside of the subunit, while an extended beta-hairpin is found that lines the wall of the exit tunnel in the center of the 70S ribosome. This is Large ribosomal subunit protein uL22 from Dehalococcoides mccartyi (strain ATCC BAA-2100 / JCM 16839 / KCTC 5957 / BAV1).